A 783-amino-acid chain; its full sequence is Isoamylase 1, chloroplastic (783 aa).

The transit peptide at 1-43 directs the protein to the chloroplast; sequence MDAIKCSSSFLHHTKLNTLFSNHTFPKISAPNFKPLFRPISIS. The active-site Nucleophile is D410. The active-site Proton donor is E466.

This sequence belongs to the glycosyl hydrolase 13 family. Associates with ISA2 to form the heteromultimeric complex Iso1 required for amylopectin synthesis.

It is found in the plastid. The protein resides in the chloroplast. The enzyme catalyses Hydrolysis of (1-&gt;6)-alpha-D-glucosidic branch linkages in glycogen, amylopectin and their beta-limit dextrins.. It functions in the pathway glycan biosynthesis; starch biosynthesis. In terms of biological role, involved in the trimming of pre-amylopectin chains. Accelerates the crystallization of nascent amylopectin molecules during starch synthesis. ISA1 and ISA2 work exclusively together as a multimeric holoenzyme. ISA1-ISA2 removes preferentially branches that are very close to other branches. Promotes negative gravitropic responses in shoots by facilitating starch granules (statoliths) formation in hypocotyls. This is Isoamylase 1, chloroplastic from Arabidopsis thaliana (Mouse-ear cress).